The sequence spans 278 residues: MRVITTIAELRTARAALQGTTGLVPTMGYLHEGHLSLVRRARAENDHVITTIFVNPTQFGPSEDLTRYPRDLPRDLALLEAEKVDLVFAPDVSEMYPPGFGTFIDVGPIAAPLEGAARPGHFRGVATVVCKLFAITSPHRAYFGQKDAQQTLVIRRMTLDLNLPVEIVVCPIVREPDGLAMSSRNVYLNPEERRAATVLFRALRAVQERFAAGERNGDALRAAMRAVIDAEPLARADYVSVADLDDLHELETVTNRALASLAVRIGTTRLIDNCVLEA.

27–34 (MGYLHEGH) contributes to the ATP binding site. The Proton donor role is filled by histidine 34. Residue glutamine 58 coordinates (R)-pantoate. Position 58 (glutamine 58) interacts with beta-alanine. Residue 144 to 147 (GQKD) coordinates ATP. Glutamine 150 contacts (R)-pantoate. ATP-binding positions include valine 173 and 181–184 (MSSR).

The protein belongs to the pantothenate synthetase family. In terms of assembly, homodimer.

It localises to the cytoplasm. It catalyses the reaction (R)-pantoate + beta-alanine + ATP = (R)-pantothenate + AMP + diphosphate + H(+). It participates in cofactor biosynthesis; (R)-pantothenate biosynthesis; (R)-pantothenate from (R)-pantoate and beta-alanine: step 1/1. Functionally, catalyzes the condensation of pantoate with beta-alanine in an ATP-dependent reaction via a pantoyl-adenylate intermediate. This chain is Pantothenate synthetase, found in Roseiflexus sp. (strain RS-1).